Reading from the N-terminus, the 233-residue chain is Small ribosomal subunit protein uS2 (233 aa).

Belongs to the universal ribosomal protein uS2 family.

This chain is Small ribosomal subunit protein uS2, found in Bacillus cereus (strain G9842).